Reading from the N-terminus, the 66-residue chain is DNA gyrase inhibitor YacG (66 aa).

Cysteine 9, cysteine 12, cysteine 28, and cysteine 32 together coordinate Zn(2+). Residues 45 to 66 are disordered; the sequence is HKIAGSEGSEDELYSGDLEPRH.

The protein belongs to the DNA gyrase inhibitor YacG family. As to quaternary structure, interacts with GyrB. It depends on Zn(2+) as a cofactor.

Its function is as follows. Inhibits all the catalytic activities of DNA gyrase by preventing its interaction with DNA. Acts by binding directly to the C-terminal domain of GyrB, which probably disrupts DNA binding by the gyrase. This is DNA gyrase inhibitor YacG from Pseudomonas putida (strain ATCC 700007 / DSM 6899 / JCM 31910 / BCRC 17059 / LMG 24140 / F1).